The sequence spans 263 residues: Endonuclease 8 (263 aa).

Proline 2 serves as the catalytic Schiff-base intermediate with DNA. Glutamate 3 (proton donor) is an active-site residue. The Proton donor; for beta-elimination activity role is filled by lysine 53. DNA is bound by residues glutamine 70, arginine 125, and asparagine 169. The FPG-type zinc finger occupies 229 to 263 (KLFHRDGEACERCGGIIEKTTLSSRPFYWCPHCQK). Catalysis depends on arginine 253, which acts as the Proton donor; for delta-elimination activity.

The protein belongs to the FPG family. Zn(2+) is required as a cofactor.

The catalysed reaction is 2'-deoxyribonucleotide-(2'-deoxyribose 5'-phosphate)-2'-deoxyribonucleotide-DNA = a 3'-end 2'-deoxyribonucleotide-(2,3-dehydro-2,3-deoxyribose 5'-phosphate)-DNA + a 5'-end 5'-phospho-2'-deoxyribonucleoside-DNA + H(+). Its function is as follows. Involved in base excision repair of DNA damaged by oxidation or by mutagenic agents. Acts as a DNA glycosylase that recognizes and removes damaged bases. Has a preference for oxidized pyrimidines, such as thymine glycol, 5,6-dihydrouracil and 5,6-dihydrothymine. Has AP (apurinic/apyrimidinic) lyase activity and introduces nicks in the DNA strand. Cleaves the DNA backbone by beta-delta elimination to generate a single-strand break at the site of the removed base with both 3'- and 5'-phosphates. The chain is Endonuclease 8 from Salmonella typhimurium (strain SL1344).